The following is a 498-amino-acid chain: ATP synthase subunit beta, chloroplastic (498 aa).

An ATP-binding site is contributed by 172–179 (GGAGVGKT).

This sequence belongs to the ATPase alpha/beta chains family. F-type ATPases have 2 components, CF(1) - the catalytic core - and CF(0) - the membrane proton channel. CF(1) has five subunits: alpha(3), beta(3), gamma(1), delta(1), epsilon(1). CF(0) has four main subunits: a(1), b(1), b'(1) and c(9-12).

Its subcellular location is the plastid. The protein resides in the chloroplast thylakoid membrane. It catalyses the reaction ATP + H2O + 4 H(+)(in) = ADP + phosphate + 5 H(+)(out). Its function is as follows. Produces ATP from ADP in the presence of a proton gradient across the membrane. The catalytic sites are hosted primarily by the beta subunits. The polypeptide is ATP synthase subunit beta, chloroplastic (Populus alba (White poplar)).